We begin with the raw amino-acid sequence, 101 residues long: NADH-quinone oxidoreductase subunit K (101 aa).

Transmembrane regions (helical) follow at residues 4 to 24, 29 to 49, and 65 to 85; these read VGHY…GIFI, IIVI…NLVA, and FVLT…VIYF.

It belongs to the complex I subunit 4L family. NDH-1 is composed of 14 different subunits. Subunits NuoA, H, J, K, L, M, N constitute the membrane sector of the complex.

The protein resides in the cell inner membrane. The catalysed reaction is a quinone + NADH + 5 H(+)(in) = a quinol + NAD(+) + 4 H(+)(out). Functionally, NDH-1 shuttles electrons from NADH, via FMN and iron-sulfur (Fe-S) centers, to quinones in the respiratory chain. The immediate electron acceptor for the enzyme in this species is believed to be ubiquinone. Couples the redox reaction to proton translocation (for every two electrons transferred, four hydrogen ions are translocated across the cytoplasmic membrane), and thus conserves the redox energy in a proton gradient. This chain is NADH-quinone oxidoreductase subunit K, found in Sphingopyxis alaskensis (strain DSM 13593 / LMG 18877 / RB2256) (Sphingomonas alaskensis).